The primary structure comprises 321 residues: Olfactory receptor 5K4 (321 aa).

At 1–25 the chain is on the extracellular side; the sequence is MARENHSLAAEFILIGFTNYPELKT. N-linked (GlcNAc...) asparagine glycosylation occurs at asparagine 5. Residues 26 to 46 form a helical membrane-spanning segment; it reads LLFVVFSAIYLVTMVGNLGLV. The Cytoplasmic portion of the chain corresponds to 47–54; sequence ALIYVERR. A helical transmembrane segment spans residues 55–75; it reads LLTPMYIFLGNLALMDSCCSC. Topologically, residues 76–97 are extracellular; that stretch reads AVTPKMLENFFSEDRIISLYEC. Cysteine 97 and cysteine 179 are joined by a disulfide. A helical membrane pass occupies residues 98–118; it reads MAQFYFLCLAETTDCFLLATM. Topologically, residues 119-139 are cytoplasmic; sequence AYDRYVAICHPLQYHTMMSKT. A helical membrane pass occupies residues 140-160; it reads LCIRMTTGAFKAGNLHSMIHV. Topologically, residues 161-205 are extracellular; it reads GLLLRLTFCRSNKIHHFFCDILPLYRLSCTDPSINELMIYIFSIP. A helical membrane pass occupies residues 206-226; that stretch reads IQIFTIATVLISYLCILLTVF. Over 227-240 the chain is Cytoplasmic; it reads KMKSKEGRGKAFST. Residues 241 to 261 traverse the membrane as a helical segment; the sequence is CASHFLSVSIFYICLLMYIGP. Over 262-268 the chain is Extracellular; the sequence is SEEGDKD. The chain crosses the membrane as a helical span at residues 269–289; the sequence is TPVAIFYAIVIPLLNPFIYSL. Residues 290 to 321 lie on the Cytoplasmic side of the membrane; the sequence is RNKEVINVLKKIMRNYNILKQTCSIANLFLIY.

It belongs to the G-protein coupled receptor 1 family.

The protein resides in the cell membrane. In terms of biological role, odorant receptor. The chain is Olfactory receptor 5K4 (OR5K4) from Homo sapiens (Human).